The sequence spans 374 residues: C-C chemokine receptor type 2 (374 aa).

Topologically, residues 1–42 (MLSTSRSRFIRNTNESGEEVTTFFDYDYGAPCHKFDVKQIGA) are extracellular. N-linked (GlcNAc...) asparagine glycosylation is present at asparagine 14. Tyrosine 26 carries the post-translational modification Sulfotyrosine. A helical membrane pass occupies residues 43 to 70 (QLLPPLYSLVFIFGFVGNMLVVLILINC). The Cytoplasmic segment spans residues 71–80 (KKLKCLTDIY). Residues 81–100 (LLNLAISDLLFLITLPLWAH) traverse the membrane as a helical segment. The Extracellular segment spans residues 101–114 (SAANEWVFGNAMCK). A disulfide bridge connects residues cysteine 113 and cysteine 190. A helical transmembrane segment spans residues 115–136 (LFTGLYHIGYFGGIFFIILLTI). The Cytoplasmic portion of the chain corresponds to 137 to 153 (DRYLAIVHAVFALKART). Phosphotyrosine; by JAK2 is present on tyrosine 139. A helical transmembrane segment spans residues 154-178 (VTFGVVTSVITWLVAVFASVPGIIF). Residues 179–206 (TKCQKEDSVYVCGPYFPRGWNNFHTIMR) lie on the Extracellular side of the membrane. The chain crosses the membrane as a helical span at residues 207–226 (NILGLVLPLLIMVICYSGIL). Residues 227–243 (KTLLRCRNEKKRHRAVR) lie on the Cytoplasmic side of the membrane. A helical membrane pass occupies residues 244–268 (VIFTIMIVYFLFWTPYNIVILLNTF). Over 269–285 (QEFFGLSNCESTSQLDQ) the chain is Extracellular. Residues 286–309 (ATQVTETLGMTHCCINPIIYAFVG) form a helical membrane-spanning segment. The Cytoplasmic segment spans residues 310-374 (EKFRSLFHIA…EASLQDKEGA (65 aa)). Residues 348–374 (QGLLDGRGKGKSIGRAPEASLQDKEGA) form a disordered region.

This sequence belongs to the G-protein coupled receptor 1 family. Interacts with ARRB1. Interacts (via extracellular N-terminal region) with beta-defensin DEFB106A/DEFB106B; this interaction may preferentially require specific tyrosine sulfation on CCR2. Interacts with NUP85; the interaction is required for CCR2 clusters formation on the cell membrane and CCR2 signaling. In terms of assembly, (Microbial infection) Binds to HIV-1 Tat. In terms of processing, N-glycosylated. Sulfation increases the affinity for both monomeric and dimeric CCL2 with stronger binding to the monomeric form. Binding of sulfated CCR2 to CCL2 promotes conversion of CCL2 from dimer to monomer. As to expression, expressed by monocytes and IL2-activated NK cells. Abundantly expressed on CD14+/CD16- monocytes and weakly on CD14+/CD16+ monocytes, type 2 dendritic cells (DCs) and plasmacytoid DCs (at protein level).

The protein localises to the cell membrane. Key functional receptor for CCL2 but can also bind CCL7, and CCL12. Also transduces signaling mediated by CCL13. Its binding with CCL2 on monocytes and macrophages mediates chemotaxis and migration induction through the activation of the PI3K cascade, the small G protein Rac and lamellipodium protrusion. Also acts as a receptor for the beta-defensin DEFB106A/DEFB106B. Regulates the expression of T-cell inflammatory cytokines and T-cell differentiation, promoting the differentiation of T-cells into T-helper 17 cells (Th17) during inflammation. Facilitates the export of mature thymocytes by enhancing directional movement of thymocytes to sphingosine-1-phosphate stimulation and up-regulation of S1P1R expression; signals through the JAK-STAT pathway to regulate FOXO1 activity leading to an increased expression of S1P1R. Plays an important role in mediating peripheral nerve injury-induced neuropathic pain. Increases NMDA-mediated synaptic transmission in both dopamine D1 and D2 receptor-containing neurons, which may be caused by MAPK/ERK-dependent phosphorylation of GRIN2B/NMDAR2B. Mediates the recruitment of macrophages and monocytes to the injury site following brain injury. In terms of biological role, (Microbial infection) Alternative coreceptor with CD4 for HIV-1 infection. This is C-C chemokine receptor type 2 (CCR2) from Homo sapiens (Human).